A 419-amino-acid polypeptide reads, in one-letter code: MRDTYSQPLARDAMAYVLAGGRGSRLKELTDNRAKPAVYFGGKSRIIDFALSNAINSGIRRIGVATQYKAHSLIRHMQRAWNFMRPERNESFDILPASQRVSEHQWYEGTADAVYQNLDIIASYAPKYMVILAGDHIYKMDYELMLRQHVESGADVTIGCLVVPRIEATGFGVMAVDTSDTITAFVEKPANPPGIPGNEDMALASMGIYVFDTKFLFDILREDAADPSSSRDFGNDIIPKIVRNGKAVAHRFTASCIRAAEEIEEYWRDVGTLDAYFEANLDLTDVVPKLNMYDRDWPIWTDQIIAAPAKFVHDEDGRRGMAISSLISQDCIVSGAIARRSLLFTGVKMGSFSSCEEAVILPYCNIGRGARLSRVILDSGVRIPEGLVVGEDPELDARRFQRTESGVCLITKRMIDQLA.

Residues Y107, G172, 187 to 188 (EK), and S205 contribute to the alpha-D-glucose 1-phosphate site.

The protein belongs to the bacterial/plant glucose-1-phosphate adenylyltransferase family. Homotetramer.

It catalyses the reaction alpha-D-glucose 1-phosphate + ATP + H(+) = ADP-alpha-D-glucose + diphosphate. The protein operates within glycan biosynthesis; glycogen biosynthesis. In terms of biological role, involved in the biosynthesis of ADP-glucose, a building block required for the elongation reactions to produce glycogen. Catalyzes the reaction between ATP and alpha-D-glucose 1-phosphate (G1P) to produce pyrophosphate and ADP-Glc. The protein is Glucose-1-phosphate adenylyltransferase of Novosphingobium aromaticivorans (strain ATCC 700278 / DSM 12444 / CCUG 56034 / CIP 105152 / NBRC 16084 / F199).